A 422-amino-acid chain; its full sequence is COUP transcription factor 1 (422 aa).

A disordered region spans residues 1 to 80 (MAMVVSSWRD…QGPPGSGQSQ (80 aa)). Low complexity predominate over residues 39–66 (EQQQAGSGAPHTPQTPGQPGAPATPGTQ). Residues 82-157 (HIECVVCGDK…VGMRREAVQR (76 aa)) constitute a DNA-binding region (nuclear receptor). NR C4-type zinc fingers lie at residues 85-105 (CVVCGDKSSGKHYGQFTCEGC) and 121-145 (CRANRNCPIDQHHRNQCQYCRLKKC). In terms of domain architecture, NR LBD spans 183-409 (YLSGYISLLL…TLIRDMLLSG (227 aa)). The important for dimerization stretch occupies residues 343 to 422 (LQEKSQCALE…NWPYMSIQCS (80 aa)).

This sequence belongs to the nuclear hormone receptor family. NR2 subfamily. Binds DNA as dimer; homodimer and probable heterodimer with NR2F6. Interacts with GTF2B; this interaction is direct. Interacts with COPS2.

Its subcellular location is the nucleus. Coup (chicken ovalbumin upstream promoter) transcription factor binds to the ovalbumin promoter and, in conjunction with another protein (S300-II) stimulates initiation of transcription. Binds to both direct repeats and palindromes of the 5'-AGGTCA-3' motif. Represses transcriptional activity of LHCG. This is COUP transcription factor 1 (Nr2f1) from Mus musculus (Mouse).